We begin with the raw amino-acid sequence, 270 residues long: MEKLSAASGYSDVTDSKAMGPLAVGCLTKCSHAFHLLCLLAMYCNGNKGPEHPNPGKPFTARGFPASATFQTTPGPQASRGFQNPETLADIPASPQLLTDGHYMTLPVSPDQLPCDDPMAGSGGAPVLRVGHDHGCHQQPRICNAPLPGPGPYRTEPAKAIKPIDRKSVHQICSGPVVLSLSTAVKELVENSLDAGATNIDLKLKDYGMDLIEVSGNGCGVEEENFEGLMMSPFLPATSRRRLGLDWCLITMGKSSRRPPTPTPEGPQSA.

Belongs to the DNA mismatch repair MutL/HexB family.

The sequence is that of Putative postmeiotic segregation increased 2-like protein 11 (PMS2P11) from Homo sapiens (Human).